A 122-amino-acid chain; its full sequence is Large ribosomal subunit protein uL14 (122 aa).

This sequence belongs to the universal ribosomal protein uL14 family. Part of the 50S ribosomal subunit. Forms a cluster with proteins L3 and L19. In the 70S ribosome, L14 and L19 interact and together make contacts with the 16S rRNA in bridges B5 and B8.

Its function is as follows. Binds to 23S rRNA. Forms part of two intersubunit bridges in the 70S ribosome. This Lactobacillus delbrueckii subsp. bulgaricus (strain ATCC 11842 / DSM 20081 / BCRC 10696 / JCM 1002 / NBRC 13953 / NCIMB 11778 / NCTC 12712 / WDCM 00102 / Lb 14) protein is Large ribosomal subunit protein uL14.